The primary structure comprises 331 residues: uncharacterized protein (331 aa).

Residue 43–50 (GANESGKS) participates in ATP binding.

This is an uncharacterized protein from Methanocaldococcus jannaschii (strain ATCC 43067 / DSM 2661 / JAL-1 / JCM 10045 / NBRC 100440) (Methanococcus jannaschii).